A 49-amino-acid chain; its full sequence is Large ribosomal subunit protein bL33 (49 aa).

This sequence belongs to the bacterial ribosomal protein bL33 family.

The polypeptide is Large ribosomal subunit protein bL33 (Clostridium beijerinckii (strain ATCC 51743 / NCIMB 8052) (Clostridium acetobutylicum)).